Here is a 427-residue protein sequence, read N- to C-terminus: MSNFSEVFARAQKTIPGGVNSPVRAFKAVGGEPVFIDHAKGAYVYDIHGKRYVDYVLSWGPMLLGHGDDDVLDAVRAKLDKGLSFGAPTEIETELAEKICNIMPGMDKVRFVNSGTEATMSAIRLARGYTGRDKIVKFEGCYHGHSDSLLIKAGSGALTLGVPSSPGVPACLAEHTITLTYNNIEQVRQLFRDRGNEIACIIVEPVAGNMNCIPPEPGFLQALREVCTQADALLIFDEVMTGFRLGLSGAQGYYQVQPDITTLGKVIGGGMPVGAFGGSERIMDFIAPVGPVYQAGTLSGNPVAMAAGLKTLEKISAEGFYQPIFDKTAALCRNLESAAKEAGIGFTTNYVGSMWGGFFTEEEKISNYQQVMACNTERFNRFFHGMLDEGVYLAPASYEAGFMSVSHSDEDIDFTVNAARKVFANIK.

Lys265 is modified (N6-(pyridoxal phosphate)lysine).

This sequence belongs to the class-III pyridoxal-phosphate-dependent aminotransferase family. HemL subfamily. Homodimer. Pyridoxal 5'-phosphate serves as cofactor.

The protein resides in the cytoplasm. The catalysed reaction is (S)-4-amino-5-oxopentanoate = 5-aminolevulinate. It participates in porphyrin-containing compound metabolism; protoporphyrin-IX biosynthesis; 5-aminolevulinate from L-glutamyl-tRNA(Glu): step 2/2. The chain is Glutamate-1-semialdehyde 2,1-aminomutase from Teredinibacter turnerae (strain ATCC 39867 / T7901).